The sequence spans 806 residues: MSQPELFHDLPLEEVIGDRFGRYSKYIIQDRALPDARDGLKPVQRRILYAMHTDGNTFDKNFRKAAKTVGNVIGNYHPHGDSSVYEAMVRMSQDWKVRNVLIEMHGNNGSIDGDPPAAMRYTEARLSPIASELLRDIDKNTVEFVPNFDDTSKEPVVLPAMFPNLLVNGSTGISAGYATDIPPHHLGEVIDAVIKRIQMPSCSVDELMEVIKGPDFPTGGIIQGVDGIRKAYETGKGKIIIRGKAEIETIRGGREQIVITEIPFEVNKANLVKKMDEFRIDKKVEGISEVRDETDRTGLRVVIELKKEADAKGILNFLYKNTDLQITYNFNMVAIHNRRPMLMSLPSILDAYIGHQKEVVTNRSVYELQKAKDRHHIVEGLMKALSILDEVIATIRSSSDKRDAKNNLIAKYEFTEPQAEAIVSLQLYRLTNTDITALKEEAEELGKKIEELESILSNDKKLLKVITNSLKALKKKYADTRRSVIEEKIEEIKINLEVMVASEDVYVTVTKDGYLKRTSQRSFAASNGQDFGMKDTDRMLHQFEMNTTDVLLLFTNKGSYIYCPVHQLPDIRWKDMGQHFSNLITIDRDETIVKAIPIKEFDPSAYLLFFTKNGMVKKTELTHYKAQRYSKALVALNLKGEDELIDVHVTNGESQIFMATHLGYGLWFGEDEVNVVGARAAGVKGINLKEDDFVVSGEILQQSDSIVLFTQRGAVKRMSLSEFEKTSRAKRGVVMLRELKKNPHRVVALFACGLEQRLMAETEKGDRKELQTKELRTNDRYSNGSFFFDEEESGKVTAVWRLHTEQ.

The Topo IIA-type catalytic domain maps to 33–499; it reads LPDARDGLKP…EEIKINLEVM (467 aa). Tyr121 (O-(5'-phospho-DNA)-tyrosine intermediate) is an active-site residue.

The protein belongs to the type II topoisomerase GyrA/ParC subunit family. ParC type 2 subfamily. In terms of assembly, heterotetramer composed of ParC and ParE.

The protein localises to the cell membrane. Its subcellular location is the cytoplasm. It catalyses the reaction ATP-dependent breakage, passage and rejoining of double-stranded DNA.. Functionally, topoisomerase IV is essential for chromosome segregation. It relaxes supercoiled DNA. Performs the decatenation events required during the replication of a circular DNA molecule. In Bacillus subtilis (strain 168), this protein is DNA topoisomerase 4 subunit A.